Reading from the N-terminus, the 312-residue chain is Putative HTH-type transcriptional regulatory protein TV0294 (312 aa).

The HTH cro/C1-type domain maps to 133-186 (LRERRNELNLSIGNISSYLGVSRRSVSLYENGSAATIDIFIRLRNILKADIVDH). Positions 144–163 (IGNISSYLGVSRRSVSLYEN) form a DNA-binding region, H-T-H motif.

The protein is Putative HTH-type transcriptional regulatory protein TV0294 of Thermoplasma volcanium (strain ATCC 51530 / DSM 4299 / JCM 9571 / NBRC 15438 / GSS1).